The following is a 216-amino-acid chain: Orotate phosphoribosyltransferase (216 aa).

5-phospho-alpha-D-ribose 1-diphosphate is bound by residues Arg100, Lys104, His106, and 126 to 134 (EDLISTGGS). Ser130 serves as a coordination point for orotate.

It belongs to the purine/pyrimidine phosphoribosyltransferase family. PyrE subfamily. In terms of assembly, homodimer. Interacts with BrxC. Requires Mg(2+) as cofactor.

It carries out the reaction orotidine 5'-phosphate + diphosphate = orotate + 5-phospho-alpha-D-ribose 1-diphosphate. It participates in pyrimidine metabolism; UMP biosynthesis via de novo pathway; UMP from orotate: step 1/2. In terms of biological role, catalyzes the transfer of a ribosyl phosphate group from 5-phosphoribose 1-diphosphate to orotate, leading to the formation of orotidine monophosphate (OMP). The chain is Orotate phosphoribosyltransferase from Bacillus subtilis (strain 168).